Reading from the N-terminus, the 326-residue chain is Probable oxidoreductase patJ (326 aa).

Residues 287-326 (HGVQPGSVNGSNGHSTGVESKLEQLGSRAQRRVVIDDAGK) are disordered. Over residues 292 to 304 (GSVNGSNGHSTGV) the composition is skewed to polar residues.

The protein belongs to the oxidoreductase OpS7 family.

It is found in the vacuole lumen. The protein resides in the cytoplasmic vesicle lumen. It functions in the pathway mycotoxin biosynthesis; patulin biosynthesis. In terms of biological role, probable oxidoreductase; part of the gene cluster that mediates the biosynthesis of patulin, an acetate-derived tetraketide mycotoxin produced by several fungal species that shows antimicrobial properties against several bacteria. PatJ acts with patO in the vacuole to convert gentisyl alcohol to isoepoxydon. The pathway begins with the synthesis of 6-methylsalicylic acid by the polyketide synthase (PKS) patK via condensation of acetate and malonate units. The 6-methylsalicylic acid decarboxylase patG then catalyzes the decarboxylation of 6-methylsalicylic acid to yield m-cresol (also known as 3-methylphenol). These first reactions occur in the cytosol. The intermediate m-cresol is then transported into the endoplasmic reticulum where the cytochrome P450 monooxygenase patH converts it to m-hydroxybenzyl alcohol, which is further converted to gentisyl alcohol by the cytochrome P450 monooxygenase patI. The oxidoreductases patJ and patO further convert gentisyl alcohol to isoepoxydon in the vacuole. PatN catalyzes then the transformation of isoepoxydon into phyllostine. The cluster protein patF is responsible for the conversion from phyllostine to neopatulin whereas the alcohol dehydrogenase patD converts neopatulin to E-ascladiol. The steps between isoepoxydon and E-ascladiol occur in the cytosol, and E-ascladiol is probably secreted to the extracellular space by one of the cluster-specific transporters patC or patM. Finally, the secreted patulin synthase patE catalyzes the conversion of E-ascladiol to patulin. In Penicillium expansum (Blue mold rot fungus), this protein is Probable oxidoreductase patJ.